Reading from the N-terminus, the 214-residue chain is Phosphatidylserine decarboxylase proenzyme (214 aa).

Residue Ser182 is the Schiff-base intermediate with substrate; via pyruvic acid of the active site. Ser182 is subject to Pyruvic acid (Ser); by autocatalysis.

This sequence belongs to the phosphatidylserine decarboxylase family. PSD-A subfamily. In terms of assembly, heterodimer of a large membrane-associated beta subunit and a small pyruvoyl-containing alpha subunit. The cofactor is pyruvate. In terms of processing, is synthesized initially as an inactive proenzyme. Formation of the active enzyme involves a self-maturation process in which the active site pyruvoyl group is generated from an internal serine residue via an autocatalytic post-translational modification. Two non-identical subunits are generated from the proenzyme in this reaction, and the pyruvate is formed at the N-terminus of the alpha chain, which is derived from the carboxyl end of the proenzyme. The post-translation cleavage follows an unusual pathway, termed non-hydrolytic serinolysis, in which the side chain hydroxyl group of the serine supplies its oxygen atom to form the C-terminus of the beta chain, while the remainder of the serine residue undergoes an oxidative deamination to produce ammonia and the pyruvoyl prosthetic group on the alpha chain.

The protein resides in the cell membrane. It catalyses the reaction a 1,2-diacyl-sn-glycero-3-phospho-L-serine + H(+) = a 1,2-diacyl-sn-glycero-3-phosphoethanolamine + CO2. Its pathway is phospholipid metabolism; phosphatidylethanolamine biosynthesis; phosphatidylethanolamine from CDP-diacylglycerol: step 2/2. In terms of biological role, catalyzes the formation of phosphatidylethanolamine (PtdEtn) from phosphatidylserine (PtdSer). In Burkholderia cenocepacia (strain HI2424), this protein is Phosphatidylserine decarboxylase proenzyme.